The following is a 236-amino-acid chain: Concanavalin-Ma (236 aa).

Residues glutamate 8 and aspartate 10 each coordinate Mn(2+). Residues aspartate 10, tyrosine 12, asparagine 14, and aspartate 19 each contribute to the Ca(2+) site. Tyrosine 12 serves as a coordination point for a carbohydrate. Residues aspartate 19 and histidine 24 each contribute to the Mn(2+) site. A carbohydrate is bound at residue 98–99 (LY). Ca(2+) is bound at residue aspartate 207. Arginine 227 contacts a carbohydrate.

It belongs to the leguminous lectin family. In terms of assembly, homotetramer.

Its function is as follows. Glucose/D-mannose specific lectin. This chain is Concanavalin-Ma, found in Canavalia rosea (Beach bean).